The sequence spans 896 residues: DNA mismatch repair protein MutS (896 aa).

607–614 contributes to the ATP binding site; that stretch reads GPNMSGKS. A disordered region spans residues 809–835; it reads ANSVAPNTAASMPVEAADESQPVESET.

The protein belongs to the DNA mismatch repair MutS family.

This protein is involved in the repair of mismatches in DNA. It is possible that it carries out the mismatch recognition step. This protein has a weak ATPase activity. The polypeptide is DNA mismatch repair protein MutS (Lactiplantibacillus plantarum (strain ATCC BAA-793 / NCIMB 8826 / WCFS1) (Lactobacillus plantarum)).